Consider the following 518-residue polypeptide: Xylose import ATP-binding protein XylG (518 aa).

2 consecutive ABC transporter domains span residues 6 to 245 (LQMN…VGRE) and 262 to 507 (FEAR…LSHP). ATP is bound at residue 38-45 (GENGTGKS).

It belongs to the ABC transporter superfamily. Xylose importer (TC 3.A.1.2.4) family. In terms of assembly, the complex is composed of two ATP-binding proteins (XylG), two transmembrane proteins (XylH) and a solute-binding protein (XylF).

Its subcellular location is the cell inner membrane. The catalysed reaction is D-xylose(out) + ATP + H2O = D-xylose(in) + ADP + phosphate + H(+). Part of the ABC transporter complex XylFGH involved in xylose import. Responsible for energy coupling to the transport system. This Pseudomonas savastanoi pv. phaseolicola (strain 1448A / Race 6) (Pseudomonas syringae pv. phaseolicola (strain 1448A / Race 6)) protein is Xylose import ATP-binding protein XylG.